The sequence spans 342 residues: Phosphate acyltransferase (342 aa).

It belongs to the PlsX family. As to quaternary structure, homodimer. Probably interacts with PlsY.

The protein localises to the cytoplasm. The enzyme catalyses a fatty acyl-[ACP] + phosphate = an acyl phosphate + holo-[ACP]. The protein operates within lipid metabolism; phospholipid metabolism. Functionally, catalyzes the reversible formation of acyl-phosphate (acyl-PO(4)) from acyl-[acyl-carrier-protein] (acyl-ACP). This enzyme utilizes acyl-ACP as fatty acyl donor, but not acyl-CoA. This is Phosphate acyltransferase from Shewanella putrefaciens (strain CN-32 / ATCC BAA-453).